Consider the following 436-residue polypeptide: GTPase Der (436 aa).

EngA-type G domains lie at P4 to Q167 and I176 to R351. Residues G10–S17, D57–I61, N119–D122, G182–S189, D229–M233, and N294–D297 each bind GTP. One can recognise a KH-like domain in the interval K352–N436.

It belongs to the TRAFAC class TrmE-Era-EngA-EngB-Septin-like GTPase superfamily. EngA (Der) GTPase family. As to quaternary structure, associates with the 50S ribosomal subunit.

Its function is as follows. GTPase that plays an essential role in the late steps of ribosome biogenesis. The sequence is that of GTPase Der from Macrococcus caseolyticus (strain JCSC5402) (Macrococcoides caseolyticum).